The primary structure comprises 78 residues: Beta-defensin 12 (78 aa).

An N-terminal signal peptide occupies residues Met-1–Ala-27. 3 disulfide bridges follow: Cys-46/Cys-73, Cys-53/Cys-67, and Cys-57/Cys-74.

Belongs to the beta-defensin family.

The protein resides in the secreted. Its function is as follows. Has antibacterial activity. This Rattus norvegicus (Rat) protein is Beta-defensin 12 (Defb12).